Consider the following 72-residue polypeptide: Large ribosomal subunit protein bL31 (72 aa).

Positions 16, 18, 38, and 41 each coordinate Zn(2+).

The protein belongs to the bacterial ribosomal protein bL31 family. Type A subfamily. In terms of assembly, part of the 50S ribosomal subunit. The cofactor is Zn(2+).

Its function is as follows. Binds the 23S rRNA. The sequence is that of Large ribosomal subunit protein bL31 from Aliivibrio salmonicida (strain LFI1238) (Vibrio salmonicida (strain LFI1238)).